Consider the following 253-residue polypeptide: HTH-type transcriptional regulator YdeO (253 aa).

One can recognise an HTH araC/xylS-type domain in the interval Gly137 to Glu233. DNA-binding regions (H-T-H motif) lie at residues Lys154–Gln175 and Val200–Phe223.

In terms of biological role, induces the expression of gadE. Could also regulate the expression of other genes involved in acid resistance. This is HTH-type transcriptional regulator YdeO (ydeO) from Shigella flexneri.